Here is a 156-residue protein sequence, read N- to C-terminus: ATP synthase subunit b (156 aa).

The helical transmembrane segment at 7 to 27 (LIGQLIAFALFVAFCMKFVWP) threads the bilayer.

It belongs to the ATPase B chain family. In terms of assembly, F-type ATPases have 2 components, F(1) - the catalytic core - and F(0) - the membrane proton channel. F(1) has five subunits: alpha(3), beta(3), gamma(1), delta(1), epsilon(1). F(0) has three main subunits: a(1), b(2) and c(10-14). The alpha and beta chains form an alternating ring which encloses part of the gamma chain. F(1) is attached to F(0) by a central stalk formed by the gamma and epsilon chains, while a peripheral stalk is formed by the delta and b chains.

Its subcellular location is the cell inner membrane. Its function is as follows. F(1)F(0) ATP synthase produces ATP from ADP in the presence of a proton or sodium gradient. F-type ATPases consist of two structural domains, F(1) containing the extramembraneous catalytic core and F(0) containing the membrane proton channel, linked together by a central stalk and a peripheral stalk. During catalysis, ATP synthesis in the catalytic domain of F(1) is coupled via a rotary mechanism of the central stalk subunits to proton translocation. In terms of biological role, component of the F(0) channel, it forms part of the peripheral stalk, linking F(1) to F(0). This is ATP synthase subunit b from Actinobacillus pleuropneumoniae serotype 7 (strain AP76).